A 148-amino-acid polypeptide reads, in one-letter code: Small ribosomal subunit protein eS12B (148 aa).

Belongs to the eukaryotic ribosomal protein eS12 family. As to quaternary structure, component of the small ribosomal subunit (SSU). Mature yeast ribosomes consist of a small (40S) and a large (60S) subunit. The 40S small subunit contains 1 molecule of ribosomal RNA (18S rRNA) and at least 33 different proteins. The large 60S subunit contains 3 rRNA molecules (25S, 5.8S and 5S rRNA) and at least 46 different proteins.

The protein resides in the cytoplasm. In terms of biological role, component of the ribosome, a large ribonucleoprotein complex responsible for the synthesis of proteins in the cell. The small ribosomal subunit (SSU) binds messenger RNAs (mRNAs) and translates the encoded message by selecting cognate aminoacyl-transfer RNA (tRNA) molecules. The large subunit (LSU) contains the ribosomal catalytic site termed the peptidyl transferase center (PTC), which catalyzes the formation of peptide bonds, thereby polymerizing the amino acids delivered by tRNAs into a polypeptide chain. The nascent polypeptides leave the ribosome through a tunnel in the LSU and interact with protein factors that function in enzymatic processing, targeting, and the membrane insertion of nascent chains at the exit of the ribosomal tunnel. This is Small ribosomal subunit protein eS12B (rps1202) from Schizosaccharomyces pombe (strain 972 / ATCC 24843) (Fission yeast).